Reading from the N-terminus, the 187-residue chain is uncharacterized protein (187 aa).

Positions 1–25 are cleaved as a signal peptide; sequence MSKFVKTAIAAAMVMGAFTSTATIA.

It belongs to the fimbrial protein family.

In terms of biological role, part of the yfcOPQRSUV fimbrial operon. Could contribute to adhesion to various surfaces in specific environmental niches. Increases adhesion to eukaryotic T24 bladder epithelial cells in the absence of fim genes. This is an uncharacterized protein from Escherichia coli (strain K12).